The sequence spans 206 residues: Ribosomal RNA small subunit methyltransferase G (206 aa).

S-adenosyl-L-methionine-binding positions include Gly73, Leu78, 124–125 (VE), and Arg139.

It belongs to the methyltransferase superfamily. RNA methyltransferase RsmG family.

It is found in the cytoplasm. The catalysed reaction is guanosine(527) in 16S rRNA + S-adenosyl-L-methionine = N(7)-methylguanosine(527) in 16S rRNA + S-adenosyl-L-homocysteine. Specifically methylates the N7 position of guanine in position 527 of 16S rRNA. In Pectobacterium carotovorum subsp. carotovorum (strain PC1), this protein is Ribosomal RNA small subunit methyltransferase G.